A 290-amino-acid chain; its full sequence is Coiled-coil domain-containing protein 137 (290 aa).

4 disordered regions span residues 1 to 92, 98 to 117, 139 to 181, and 269 to 290; these read MARP…EAQV, LEKEAKGEEPDIAVPKFKQR, LSKN…EARA, and RQEMTPAQPPGSSFQRQGHACL. A compositionally biased stretch (low complexity) spans 20-39; that stretch reads SGQPQGRRQQQAQGQQRSAS. The span at 56–79 shows a compositional bias: basic and acidic residues; that stretch reads KNQDEQEIPFRLREIMRSRQEMKK. Residues 66–89 are a coiled coil; that stretch reads RLREIMRSRQEMKKTLSNKKRKKE. Residues 154–163 are compositionally biased toward basic and acidic residues; that stretch reads PKKEKSERKK. Residues 155-192 are a coiled coil; sequence KKEKSERKKAFQKRRLEKAQRKREARAVDRLEQELLKD. The segment covering 164-178 has biased composition (basic residues); the sequence is AFQKRRLEKAQRKRE.

The protein resides in the chromosome. The sequence is that of Coiled-coil domain-containing protein 137 (Ccdc137) from Mus musculus (Mouse).